The following is a 499-amino-acid chain: Probable cytosol aminopeptidase (499 aa).

Lys263 and Asp268 together coordinate Mn(2+). The active site involves Lys275. Residues Asp286, Asp345, and Glu347 each coordinate Mn(2+). Residue Arg349 is part of the active site.

The protein belongs to the peptidase M17 family. The cofactor is Mn(2+).

The protein resides in the cytoplasm. It carries out the reaction Release of an N-terminal amino acid, Xaa-|-Yaa-, in which Xaa is preferably Leu, but may be other amino acids including Pro although not Arg or Lys, and Yaa may be Pro. Amino acid amides and methyl esters are also readily hydrolyzed, but rates on arylamides are exceedingly low.. The enzyme catalyses Release of an N-terminal amino acid, preferentially leucine, but not glutamic or aspartic acids.. In terms of biological role, presumably involved in the processing and regular turnover of intracellular proteins. Catalyzes the removal of unsubstituted N-terminal amino acids from various peptides. This Chlamydia trachomatis serovar A (strain ATCC VR-571B / DSM 19440 / HAR-13) protein is Probable cytosol aminopeptidase.